The chain runs to 552 residues: Leiomodin-2 (552 aa).

The segment at 1–47 is interaction with tropomyosin alpha; sequence MSTFGYRRELSKYEDIDEDELLASLTEEELKELERELEDIEPDRNLP. 2 interaction with actin regions span residues 1-169 and 170-498; these read MSTF…SSHV and RHKK…KEIK. Residues 13–46 are a coiled coil; sequence YEDIDEDELLASLTEEELKELERELEDIEPDRNL. Disordered stretches follow at residues 33–67, 87–191, and 364–531; these read LERELEDIEPDRNLPVGQRQKSLTEKTPTGTFSRE, GACE…DGKD, and MDKQ…DNLM. A compositionally biased stretch (polar residues) spans 51 to 64; it reads RQKSLTEKTPTGTF. A coiled-coil region spans residues 86–151; it reads LGACEKDSEQ…DDEDEEKQNS (66 aa). 2 stretches are compositionally biased toward acidic residues: residues 93 to 108 and 115 to 147; these read SEQEEDNSEDIQEECF and VSEEAYTEEDDEEEEEEEEEEEDEDDSDDEDEE. Positions 364–377 are enriched in basic and acidic residues; sequence MDKQRQKRMQEQRQ. The segment covering 398–415 has biased composition (low complexity); that stretch reads PRSSPYTSPKSSPWSSPK. Over residues 425–450 the composition is skewed to pro residues; that stretch reads SQPPAPAPPPPPPPPPPPPPPPPPVI. Residues 478-488 are compositionally biased toward basic residues; the sequence is QKKKKGKKGKK. Residues 489–513 are compositionally biased toward basic and acidic residues; the sequence is HENSILKEIKDSLKSVSDRKSEEGS. Positions 514–524 are enriched in polar residues; sequence RPSTRPSTPQR. The segment at 526-545 is interaction with actin 3; the sequence is LHDNLMEAIRASSIKQLRRV. A WH2 domain is found at 526-545; the sequence is LHDNLMEAIRASSIKQLRRV.

The protein belongs to the tropomodulin family. In terms of assembly, can bind at least three actin monomers and thereby provides a nucleus for actin filament formation. Interacts (via N-terminus) with tropomyosin alpha (TPM1) (via N-terminus). May also interact with TPM2 (via N-terminus).

It localises to the cytoplasm. The protein localises to the myofibril. It is found in the sarcomere. Its subcellular location is the m line. The protein resides in the cytoskeleton. Functionally, mediates nucleation of actin filaments and thereby promotes actin polymerization. Plays a role in the regulation of actin filament length. Required for normal sarcomere organization in the heart, and for normal heart function. This is Leiomodin-2 (LMOD2) from Gallus gallus (Chicken).